Reading from the N-terminus, the 185-residue chain is Elongation factor P (185 aa).

The protein belongs to the elongation factor P family.

The protein localises to the cytoplasm. The protein operates within protein biosynthesis; polypeptide chain elongation. Its function is as follows. Involved in peptide bond synthesis. Stimulates efficient translation and peptide-bond synthesis on native or reconstituted 70S ribosomes in vitro. Probably functions indirectly by altering the affinity of the ribosome for aminoacyl-tRNA, thus increasing their reactivity as acceptors for peptidyl transferase. This Bacillus cytotoxicus (strain DSM 22905 / CIP 110041 / 391-98 / NVH 391-98) protein is Elongation factor P.